A 314-amino-acid polypeptide reads, in one-letter code: Peroxisome biogenesis factor 10 (314 aa).

Topologically, residues methionine 1–glutamate 7 are peroxisomal matrix. The chain crosses the membrane as a helical span at residues isoleucine 8–leucine 37. A topological domain (cytoplasmic) is located at residue glycine 38. The chain crosses the membrane as a helical span at residues glutamine 39–serine 60. Residues threonine 61–proline 90 are Peroxisomal matrix-facing. Residues serine 91–isoleucine 110 traverse the membrane as a helical segment. Residues glutamine 111 to aspartate 142 are Cytoplasmic-facing. A helical transmembrane segment spans residues valine 143–threonine 166. Topologically, residues glycine 167–arginine 197 are peroxisomal matrix. A helical membrane pass occupies residues phenylalanine 198 to phenylalanine 218. Residues leucine 219–leucine 314 lie on the Cytoplasmic side of the membrane. The Zn(2+) site is built by cysteine 255, cysteine 258, cysteine 269, histidine 271, cysteine 274, cysteine 277, cysteine 296, and cysteine 299. The segment at cysteine 255–arginine 300 adopts an RING-type zinc-finger fold.

Belongs to the pex2/pex10/pex12 family. Component of the PEX2-PEX10-PEX12 retrotranslocation channel.

It is found in the peroxisome membrane. The catalysed reaction is S-ubiquitinyl-[E2 ubiquitin-conjugating enzyme]-L-cysteine + [acceptor protein]-L-lysine = [E2 ubiquitin-conjugating enzyme]-L-cysteine + N(6)-ubiquitinyl-[acceptor protein]-L-lysine.. Its pathway is protein modification; protein ubiquitination. Its activity is regulated as follows. The E3 ubiquitin-protein ligase activity is stimulated by PEX12/prx-12. Its function is as follows. E3 ubiquitin-protein ligase component of a retrotranslocation channel required for peroxisome organization by mediating export of the PEX5/prx-5 receptor from peroxisomes to the cytosol, thereby promoting PEX5/prx-5 recycling. The retrotranslocation channel is composed of PEX2/prx-2, PEX10/prx-10 and PEX12/prx-12; each subunit contributing transmembrane segments that coassemble into an open channel that specifically allows the passage of PEX5/prx-5 through the peroxisomal membrane. PEX10/prx-10 also regulates PEX5 recycling by acting as a E3 ubiquitin-protein ligase. When PEX5/prx-5 recycling is compromised, PEX10/prx-10 catalyzes polyubiquitination of PEX5/prx-5 during its passage through the retrotranslocation channel, leading to its degradation. This Caenorhabditis elegans protein is Peroxisome biogenesis factor 10.